A 43-amino-acid polypeptide reads, in one-letter code: Potassium channel toxin gamma-KTx 4.13 (43 aa).

Cystine bridges form between Cys-5/Cys-23, Cys-11/Cys-34, Cys-20/Cys-39, and Cys-24/Cys-41.

This sequence belongs to the ergtoxin family. Gamma-KTx 4 subfamily. In terms of tissue distribution, expressed by the venom gland.

It localises to the secreted. Functionally, reversibly blocks Kv11/ERG potassium channels. This is Potassium channel toxin gamma-KTx 4.13 from Centruroides noxius (Mexican scorpion).